Here is a 302-residue protein sequence, read N- to C-terminus: Oligopeptide transport system permease protein OppC (302 aa).

The Cytoplasmic segment spans residues 1–39; sequence MMLSKKNSETLENFSEKLEVEGRSLWQDARRRFMHNRAA. Residues 40-62 traverse the membrane as a helical segment; sequence VASLIVLFLIALFVTVAPMLSQF. Residues 63-102 are Periplasmic-facing; that stretch reads TYFDTDWGMMSSAPDMASGHYFGTDSSGRDLLVRVAIGGR. An ABC transmembrane type-1 domain is found at 101–290; that stretch reads GRISLMVGIA…VTLFCFNFIG (190 aa). The helical transmembrane segment at 103-125 threads the bilayer; sequence ISLMVGIAAALVAVIVGTLYGSL. Residues 126-137 lie on the Cytoplasmic side of the membrane; the sequence is SGYLGGKIDSVM. A helical membrane pass occupies residues 138–160; that stretch reads MRLLEILNSFPFMFFVILLVTFF. Topologically, residues 161-163 are periplasmic; that stretch reads GQN. A helical membrane pass occupies residues 164-183; it reads ILLIFVAIGMVSWLDMARIV. The Cytoplasmic segment spans residues 184-213; it reads RGQTLSLKRKEFIEAAQVGGVSTASIVIRH. The chain crosses the membrane as a helical span at residues 214 to 236; that stretch reads IVPNVLGVVVVYASLLVPSMILF. Topologically, residues 237 to 267 are periplasmic; that stretch reads ESFLSFLGLGTQEPLSSWGALLSDGANSMEV. A helical membrane pass occupies residues 268 to 290; sequence SPWLLLFPAGFLVVTLFCFNFIG. At 291–302 the chain is on the cytoplasmic side; it reads DGLRDALDPKDR.

Belongs to the binding-protein-dependent transport system permease family. OppBC subfamily. The complex is composed of two ATP-binding proteins (OppD and OppF), two transmembrane proteins (OppB and OppC) and a solute-binding protein (OppA).

The protein resides in the cell inner membrane. Part of the ABC transporter complex OppABCDF involved in the uptake of oligopeptides, including the cell wall murein tripeptide L-alanyl-gamma-D-glutamyl-meso-diaminopimelate. Responsible for the translocation of the substrate across the membrane. Plays an important nutritional role and is involved in the recycling of cell wall peptides. The chain is Oligopeptide transport system permease protein OppC from Salmonella typhimurium (strain LT2 / SGSC1412 / ATCC 700720).